A 389-amino-acid chain; its full sequence is PqqA peptide cyclase (389 aa).

The 216-residue stretch at 19–234 (VGLPLWLLAE…TNEYRDQLAA (216 aa)) folds into the Radical SAM core domain. Cys33, Cys37, and Cys40 together coordinate [4Fe-4S] cluster.

The protein belongs to the radical SAM superfamily. PqqE family. As to quaternary structure, interacts with PqqD. The interaction is necessary for activity of PqqE. [4Fe-4S] cluster is required as a cofactor.

The enzyme catalyses [PQQ precursor protein] + S-adenosyl-L-methionine = E-Y cross-linked-[PQQ precursor protein] + 5'-deoxyadenosine + L-methionine + H(+). Its pathway is cofactor biosynthesis; pyrroloquinoline quinone biosynthesis. Its function is as follows. Catalyzes the cross-linking of a glutamate residue and a tyrosine residue in the PqqA protein as part of the biosynthesis of pyrroloquinoline quinone (PQQ). This is PqqA peptide cyclase from Pseudomonas syringae pv. tomato (strain ATCC BAA-871 / DC3000).